Consider the following 94-residue polypeptide: Integration host factor subunit beta (94 aa).

The protein belongs to the bacterial histone-like protein family. As to quaternary structure, heterodimer of an alpha and a beta chain.

In terms of biological role, this protein is one of the two subunits of integration host factor, a specific DNA-binding protein that functions in genetic recombination as well as in transcriptional and translational control. The protein is Integration host factor subunit beta of Sodalis glossinidius (strain morsitans).